The chain runs to 93 residues: U12-lycotoxin-Ls1c (93 aa).

The N-terminal stretch at 1 to 18 (MKFAVILLFSLVVLAVAS) is a signal peptide. Residues 19–38 (ESVEEVRREIDIEDLPEQQR) constitute a propeptide that is removed on maturation.

Belongs to the neurotoxin 31 family. Contains 5 disulfide bonds. In terms of tissue distribution, expressed by the venom gland.

It is found in the secreted. In Lycosa singoriensis (Wolf spider), this protein is U12-lycotoxin-Ls1c.